Here is a 508-residue protein sequence, read N- to C-terminus: Photosystem II CP47 reaction center protein (508 aa).

Helical transmembrane passes span 21–36 (SVHLMHTALVSGWAGS), 101–115 (IILSGLLFLAAIWHW), 140–156 (GIHLFLSGVLCFSFGAF), 203–218 (IAAGVLGILAGLFHLS), 237–252 (VLSSSIAAVFFAAFVV), and 457–472 (TFALIFFFGHIWHGAR).

Belongs to the PsbB/PsbC family. PsbB subfamily. PSII is composed of 1 copy each of membrane proteins PsbA, PsbB, PsbC, PsbD, PsbE, PsbF, PsbH, PsbI, PsbJ, PsbK, PsbL, PsbM, PsbT, PsbX, PsbY, PsbZ, Psb30/Ycf12, at least 3 peripheral proteins of the oxygen-evolving complex and a large number of cofactors. It forms dimeric complexes. Binds multiple chlorophylls. PSII binds additional chlorophylls, carotenoids and specific lipids. is required as a cofactor.

It localises to the plastid. Its subcellular location is the chloroplast thylakoid membrane. Its function is as follows. One of the components of the core complex of photosystem II (PSII). It binds chlorophyll and helps catalyze the primary light-induced photochemical processes of PSII. PSII is a light-driven water:plastoquinone oxidoreductase, using light energy to abstract electrons from H(2)O, generating O(2) and a proton gradient subsequently used for ATP formation. The protein is Photosystem II CP47 reaction center protein of Adiantum capillus-veneris (Maidenhair fern).